Here is a 767-residue protein sequence, read N- to C-terminus: Transferrin receptor protein 1 (767 aa).

The Cytoplasmic portion of the chain corresponds to 1–67; that stretch reads MDQARSAFSN…LTKPKRFNGS (67 aa). 2 positions are modified to phosphoserine: Ser-9 and Ser-18. Tyr-19 bears the Phosphotyrosine mark. Residues 19-22 carry the Endocytosis signal motif; that stretch reads YTRF. At Thr-20 the chain carries Phosphothreonine. The residue at position 23 (Ser-23) is a Phosphoserine. Positions 60 to 63 match the Stop-transfer sequence motif; it reads KPKR. A helical; Signal-anchor for type II membrane protein membrane pass occupies residues 68–88; sequence FCYAVIAVIIFFLIGFMIGYL. Cys-69 carries S-palmitoyl cysteine lipidation. The Extracellular segment spans residues 89–767; sequence GYCKRVEPKS…GDIWDIDNEF (679 aa). The span at 96–110 shows a compositional bias: basic and acidic residues; that stretch reads PKSECGRSGDSKEIE. Positions 96–122 are disordered; sequence PKSECGRSGDSKEIEGTEPPETEEYFP. Acidic residues predominate over residues 111 to 121; sequence GTEPPETEEYF. N-linked (GlcNAc...) asparagine glycans are attached at residues Asn-211, Asn-258, and Asn-324. The region spanning 230–320 is the PA domain; sequence SKATTVTGKL…GTGDPYTPGF (91 aa). Residues 576 to 767 form a ligand-binding region; sequence TMDTYEVLSQ…GDIWDIDNEF (192 aa). The short motif at 653–655 is the Cell attachment site element; that stretch reads RGD. The N-linked (GlcNAc...) asparagine glycan is linked to Asn-734.

It belongs to the peptidase M28 family. M28B subfamily. In terms of assembly, homodimer; disulfide-linked. Binds one transferrin or HFE molecule per subunit. Interacts with SH3BP4. Interacts with STEAP3; facilitates TFRC endocytosis in erythroid precursor cells. Post-translationally, stearoylated by ZDHHC6 which inhibits TFRC-mediated activation of the JNK pathway and promotes mitochondrial fragmentation. Stearoylation does not affect iron uptake.

The protein resides in the cell membrane. It localises to the melanosome. Its function is as follows. Cellular uptake of iron occurs via receptor-mediated endocytosis of ligand-occupied transferrin receptor into specialized endosomes. Endosomal acidification leads to iron release. The apotransferrin-receptor complex is then recycled to the cell surface with a return to neutral pH and the concomitant loss of affinity of apotransferrin for its receptor. Transferrin receptor is necessary for development of erythrocytes and the nervous system. Positively regulates T and B cell proliferation through iron uptake. Acts as a lipid sensor that regulates mitochondrial fusion by regulating activation of the JNK pathway. When dietary levels of stearate (C18:0) are low, promotes activation of the JNK pathway, resulting in HUWE1-mediated ubiquitination and subsequent degradation of the mitofusin MFN2 and inhibition of mitochondrial fusion. When dietary levels of stearate (C18:0) are high, TFRC stearoylation inhibits activation of the JNK pathway and thus degradation of the mitofusin MFN2. Mediates uptake of NICOL1 into fibroblasts where it may regulate extracellular matrix production. The polypeptide is Transferrin receptor protein 1 (TFRC) (Equus caballus (Horse)).